Reading from the N-terminus, the 124-residue chain is NADH-quinone oxidoreductase subunit K (124 aa).

A run of 3 helical transmembrane segments spans residues 28–48 (MEHGLILAAIIFAIGLCGVMV), 52–72 (FLFMLMSLEIMMSAAGLAFIV), and 84–104 (IMFIFILTLAAAEASLGLAIL).

Belongs to the complex I subunit 4L family. NDH-1 is composed of 14 different subunits. Subunits NuoA, H, J, K, L, M, N constitute the membrane sector of the complex.

It is found in the cell inner membrane. It carries out the reaction a quinone + NADH + 5 H(+)(in) = a quinol + NAD(+) + 4 H(+)(out). In terms of biological role, NDH-1 shuttles electrons from NADH, via FMN and iron-sulfur (Fe-S) centers, to quinones in the respiratory chain. The immediate electron acceptor for the enzyme in this species is believed to be ubiquinone. Couples the redox reaction to proton translocation (for every two electrons transferred, four hydrogen ions are translocated across the cytoplasmic membrane), and thus conserves the redox energy in a proton gradient. The protein is NADH-quinone oxidoreductase subunit K of Psychrobacter sp. (strain PRwf-1).